A 359-amino-acid chain; its full sequence is MKTLTVHTPSHSYPIFIGNGLLPQAGSLLKPHLGKRAAIITNETVAPLYLGTLQTALDAAGVSHFSIILPDGEAHKNWQTLNLIFDGLMQNRAERKTTLIALGGGVIGDMVGFAAATYQRGAPFIQIPTTLLSQVDSSVGGKTAINHPLGKNMIGAFYQPQAVLADLDTLHTLPARELSAGMAEVIKYGALGDIGFFEWLEQHMPELMALERAPLTQAVYRCCQMKADIVAQDETEQGIRAWLNLGHTFGHAVEAEMGYGVWLHGEAVAAGCVLAARLSEQLGKTSAADTARLAALLEAAGLPSAPPVFAFEKWLAHMSHDKKVSGGIMRFIGLNRLGEAVITEITDTDILRRTLQPYL.

Residues 71 to 76 (DGEAHK), 105 to 109 (GVIGD), 129 to 130 (TT), Lys-142, Lys-151, and 169 to 172 (TLHT) each bind NAD(+). Zn(2+) is bound by residues Glu-184, His-247, and His-264.

The protein belongs to the sugar phosphate cyclases superfamily. Dehydroquinate synthase family. It depends on Co(2+) as a cofactor. Zn(2+) serves as cofactor. The cofactor is NAD(+).

It localises to the cytoplasm. It carries out the reaction 7-phospho-2-dehydro-3-deoxy-D-arabino-heptonate = 3-dehydroquinate + phosphate. Its pathway is metabolic intermediate biosynthesis; chorismate biosynthesis; chorismate from D-erythrose 4-phosphate and phosphoenolpyruvate: step 2/7. Its function is as follows. Catalyzes the conversion of 3-deoxy-D-arabino-heptulosonate 7-phosphate (DAHP) to dehydroquinate (DHQ). The sequence is that of 3-dehydroquinate synthase from Neisseria gonorrhoeae (strain ATCC 700825 / FA 1090).